Here is a 721-residue protein sequence, read N- to C-terminus: Peroxisomal fatty acid beta-oxidation multifunctional protein AIM1 (721 aa).

The active-site Nucleophile is E116. E136 (proton acceptor) is an active-site residue. The Microbody targeting signal motif lies at 719–721 (SKL).

In the N-terminal section; belongs to the enoyl-CoA hydratase/isomerase family. This sequence in the central section; belongs to the 3-hydroxyacyl-CoA dehydrogenase family. As to expression, widely expressed.

It is found in the peroxisome. The enzyme catalyses a (3S)-3-hydroxyacyl-CoA = a (2E)-enoyl-CoA + H2O. It catalyses the reaction a 4-saturated-(3S)-3-hydroxyacyl-CoA = a (3E)-enoyl-CoA + H2O. The catalysed reaction is (3S)-3-hydroxybutanoyl-CoA = (2E)-butenoyl-CoA + H2O. It carries out the reaction (3S)-hydroxyoctanoyl-CoA = (2E)-octenoyl-CoA + H2O. The enzyme catalyses (3S)-3-hydroxydodecanoyl-CoA = (2E)-dodecenoyl-CoA + H2O. It catalyses the reaction (3S)-hydroxytetradecanoyl-CoA = (2E)-tetradecenoyl-CoA + H2O. The catalysed reaction is (3S)-hydroxyhexanoyl-CoA = (2E)-hexenoyl-CoA + H2O. It carries out the reaction a (3Z)-enoyl-CoA = a 4-saturated (2E)-enoyl-CoA. The enzyme catalyses a (3E)-enoyl-CoA = a 4-saturated (2E)-enoyl-CoA. It catalyses the reaction (3S)-3-hydroxybutanoyl-CoA = (3R)-3-hydroxybutanoyl-CoA. The catalysed reaction is a (3S)-3-hydroxyacyl-CoA + NAD(+) = a 3-oxoacyl-CoA + NADH + H(+). It carries out the reaction (3S)-3-hydroxybutanoyl-CoA + NAD(+) = acetoacetyl-CoA + NADH + H(+). The enzyme catalyses (3S)-hydroxyhexanoyl-CoA + NAD(+) = 3-oxohexanoyl-CoA + NADH + H(+). It catalyses the reaction (3S)-hydroxyoctanoyl-CoA + NAD(+) = 3-oxooctanoyl-CoA + NADH + H(+). The catalysed reaction is (3S)-3-hydroxydodecanoyl-CoA + NAD(+) = 3-oxododecanoyl-CoA + NADH + H(+). It carries out the reaction (3S)-hydroxytetradecanoyl-CoA + NAD(+) = 3-oxotetradecanoyl-CoA + NADH + H(+). The protein operates within lipid metabolism; fatty acid beta-oxidation. Its function is as follows. Involved in peroxisomal fatty acid beta-oxidation. Required for wound-induced jasmonate biosynthesis. Possesses enoyl-CoA hydratase activity against short chain substrates (C4-C6) and 3-hydroxyacyl-CoA dehydrogenase activity against chains of variable sizes (C6-C16). Possesses cinnamoyl-CoA hydratase activity and is involved in the peroxisomal beta-oxidation pathway for the biosynthesis of benzoic acid (BA). Required for the accumulation in seeds of benzoylated glucosinolates (BGs) and substituted hydroxybenzoylated choline esters, which are BA-containing secondary metabolites. Required for salicylic acid (SA) in seeds. The sequence is that of Peroxisomal fatty acid beta-oxidation multifunctional protein AIM1 (AIM1) from Arabidopsis thaliana (Mouse-ear cress).